Consider the following 612-residue polypeptide: Serine/threonine-protein kinase Nek1 (612 aa).

One can recognise a Protein kinase domain in the interval 4 to 258 (YEFLEQIGKG…ASDLLRHPHL (255 aa)). ATP-binding positions include 10 to 18 (IGKGSFGSA) and Lys-33. Catalysis depends on Asp-129, which acts as the Proton acceptor. The span at 503–513 (ISDGSSSSDQN) shows a compositional bias: polar residues. The interval 503 to 534 (ISDGSSSSDQNATAGASSHTTSSSSRRCRFDP) is disordered. Residues 514–527 (ATAGASSHTTSSSS) are compositionally biased toward low complexity.

It belongs to the protein kinase superfamily. NEK Ser/Thr protein kinase family. NIMA subfamily.

The enzyme catalyses L-seryl-[protein] + ATP = O-phospho-L-seryl-[protein] + ADP + H(+). It carries out the reaction L-threonyl-[protein] + ATP = O-phospho-L-threonyl-[protein] + ADP + H(+). In terms of biological role, may be involved in plant development processes. The chain is Serine/threonine-protein kinase Nek1 (NEK1) from Arabidopsis thaliana (Mouse-ear cress).